The sequence spans 144 residues: Acidic phospholipase A2 (144 aa).

A signal peptide spans 1-19 (MYPAHLLVLLAVCVSLLGA). The propeptide occupies 20-27 (SDIPPLPL). 7 cysteine pairs are disulfide-bonded: cysteine 38–cysteine 98, cysteine 54–cysteine 143, cysteine 56–cysteine 72, cysteine 71–cysteine 125, cysteine 78–cysteine 118, cysteine 87–cysteine 111, and cysteine 105–cysteine 116. Ca(2+)-binding residues include tyrosine 55, glycine 57, and glycine 59. Histidine 75 is an active-site residue. Residue aspartate 76 participates in Ca(2+) binding. Aspartate 119 is an active-site residue.

This sequence belongs to the phospholipase A2 family. Group I subfamily. D49 sub-subfamily. Ca(2+) is required as a cofactor. Expressed by the venom gland.

Its subcellular location is the secreted. The catalysed reaction is a 1,2-diacyl-sn-glycero-3-phosphocholine + H2O = a 1-acyl-sn-glycero-3-phosphocholine + a fatty acid + H(+). In terms of biological role, PLA2 catalyzes the calcium-dependent hydrolysis of the 2-acyl groups in 3-sn-phosphoglycerides. This is Acidic phospholipase A2 from Aipysurus laevis (Olive sea snake).